A 352-amino-acid polypeptide reads, in one-letter code: Photosystem II protein D1 (352 aa).

An N-acetylthreonine modification is found at threonine 2. Phosphothreonine is present on threonine 2. The next 3 helical transmembrane spans lie at tyrosine 29 to serine 46, histidine 118 to leucine 133, and tryptophan 142 to alanine 156. Histidine 118 is a binding site for chlorophyll a. Residue tyrosine 126 coordinates pheophytin a. [CaMn4O5] cluster is bound by residues aspartate 170 and glutamate 189. A helical membrane pass occupies residues phenylalanine 197–leucine 218. Histidine 198 contributes to the chlorophyll a binding site. Residues histidine 215 and serine 264 to phenylalanine 265 contribute to the a quinone site. A Fe cation-binding site is contributed by histidine 215. Histidine 272 is a Fe cation binding site. The chain crosses the membrane as a helical span at residues phenylalanine 274–leucine 288. Histidine 332, glutamate 333, aspartate 342, and alanine 344 together coordinate [CaMn4O5] cluster. Residues serine 345–alanine 352 constitute a propeptide that is removed on maturation.

It belongs to the reaction center PufL/M/PsbA/D family. In terms of assembly, PSII is composed of 1 copy each of membrane proteins PsbA, PsbB, PsbC, PsbD, PsbE, PsbF, PsbH, PsbI, PsbJ, PsbK, PsbL, PsbM, PsbT, PsbX, PsbY, PsbZ, Psb30/Ycf12, at least 3 peripheral proteins of the oxygen-evolving complex and a large number of cofactors. It forms dimeric complexes. The D1/D2 heterodimer binds P680, chlorophylls that are the primary electron donor of PSII, and subsequent electron acceptors. It shares a non-heme iron and each subunit binds pheophytin, quinone, additional chlorophylls, carotenoids and lipids. D1 provides most of the ligands for the Mn4-Ca-O5 cluster of the oxygen-evolving complex (OEC). There is also a Cl(-1) ion associated with D1 and D2, which is required for oxygen evolution. The PSII complex binds additional chlorophylls, carotenoids and specific lipids. serves as cofactor. Post-translationally, tyr-161 forms a radical intermediate that is referred to as redox-active TyrZ, YZ or Y-Z. C-terminally processed by CTPA; processing is essential to allow assembly of the oxygen-evolving complex and thus photosynthetic growth.

Its subcellular location is the plastid. The protein localises to the chloroplast thylakoid membrane. It carries out the reaction 2 a plastoquinone + 4 hnu + 2 H2O = 2 a plastoquinol + O2. Its function is as follows. Photosystem II (PSII) is a light-driven water:plastoquinone oxidoreductase that uses light energy to abstract electrons from H(2)O, generating O(2) and a proton gradient subsequently used for ATP formation. It consists of a core antenna complex that captures photons, and an electron transfer chain that converts photonic excitation into a charge separation. The D1/D2 (PsbA/PsbD) reaction center heterodimer binds P680, the primary electron donor of PSII as well as several subsequent electron acceptors. The polypeptide is Photosystem II protein D1 (Chlorella ellipsoidea).